The primary structure comprises 1597 residues: Pentafunctional AROM polypeptide (1597 aa).

Positions Met-1–Asn-384 are 3-dehydroquinate synthase. Residues Asp-44–Asn-46, Glu-81–Lys-84, Gly-114–Val-116, and Asp-119 contribute to the NAD(+) site. Arg-130 is a binding site for 7-phospho-2-dehydro-3-deoxy-D-arabino-heptonate. Thr-139–Thr-140 provides a ligand contact to NAD(+). Asp-146 and Lys-152 together coordinate 7-phospho-2-dehydro-3-deoxy-D-arabino-heptonate. NAD(+) is bound at residue Lys-161. Residue Asn-162 participates in 7-phospho-2-dehydro-3-deoxy-D-arabino-heptonate binding. NAD(+) is bound by residues Phe-179 to Thr-182 and Asn-190. Glu-194 serves as a coordination point for Zn(2+). 7-phospho-2-dehydro-3-deoxy-D-arabino-heptonate contacts are provided by residues Glu-194–Lys-197 and Lys-250. The Proton acceptor; for 3-dehydroquinate synthase activity role is filled by Glu-260. 7-phospho-2-dehydro-3-deoxy-D-arabino-heptonate is bound by residues Arg-264 to Asn-268 and His-271. Position 271 (His-271) interacts with Zn(2+). Catalysis depends on His-275, which acts as the Proton acceptor; for 3-dehydroquinate synthase activity. 7-phospho-2-dehydro-3-deoxy-D-arabino-heptonate is bound by residues His-287 and Lys-356. His-287 lines the Zn(2+) pocket. The segment at Val-397–Val-842 is EPSP synthase. Catalysis depends on Cys-824, which acts as the For EPSP synthase activity. Residues Ala-866–Ser-1057 are shikimate kinase. Gly-872 to Thr-879 contacts ATP. The segment at Leu-1058–Glu-1278 is 3-dehydroquinase. Catalysis depends on His-1181, which acts as the Proton acceptor; for 3-dehydroquinate dehydratase activity. Lys-1209 acts as the Schiff-base intermediate with substrate; for 3-dehydroquinate dehydratase activity in catalysis. The segment at Ser-1291–Thr-1597 is shikimate dehydrogenase.

It in the N-terminal section; belongs to the sugar phosphate cyclases superfamily. Dehydroquinate synthase family. The protein in the 2nd section; belongs to the EPSP synthase family. This sequence in the 3rd section; belongs to the shikimate kinase family. In the 4th section; belongs to the type-I 3-dehydroquinase family. It in the C-terminal section; belongs to the shikimate dehydrogenase family. Homodimer. The cofactor is Zn(2+).

The protein localises to the cytoplasm. The catalysed reaction is 7-phospho-2-dehydro-3-deoxy-D-arabino-heptonate = 3-dehydroquinate + phosphate. It carries out the reaction 3-dehydroquinate = 3-dehydroshikimate + H2O. It catalyses the reaction shikimate + NADP(+) = 3-dehydroshikimate + NADPH + H(+). The enzyme catalyses shikimate + ATP = 3-phosphoshikimate + ADP + H(+). The catalysed reaction is 3-phosphoshikimate + phosphoenolpyruvate = 5-O-(1-carboxyvinyl)-3-phosphoshikimate + phosphate. Its pathway is metabolic intermediate biosynthesis; chorismate biosynthesis; chorismate from D-erythrose 4-phosphate and phosphoenolpyruvate: step 2/7. It participates in metabolic intermediate biosynthesis; chorismate biosynthesis; chorismate from D-erythrose 4-phosphate and phosphoenolpyruvate: step 3/7. It functions in the pathway metabolic intermediate biosynthesis; chorismate biosynthesis; chorismate from D-erythrose 4-phosphate and phosphoenolpyruvate: step 4/7. The protein operates within metabolic intermediate biosynthesis; chorismate biosynthesis; chorismate from D-erythrose 4-phosphate and phosphoenolpyruvate: step 5/7. Its pathway is metabolic intermediate biosynthesis; chorismate biosynthesis; chorismate from D-erythrose 4-phosphate and phosphoenolpyruvate: step 6/7. In terms of biological role, the AROM polypeptide catalyzes 5 consecutive enzymatic reactions in prechorismate polyaromatic amino acid biosynthesis. The protein is Pentafunctional AROM polypeptide of Ajellomyces dermatitidis (strain ER-3 / ATCC MYA-2586) (Blastomyces dermatitidis).